The chain runs to 1087 residues: Kinesin-like protein KIN-14F (1087 aa).

One can recognise a Calponin-homology (CH) domain in the interval M1–E110. The tract at residues S136 to L155 is disordered. Residues T377–I705 form the Kinesin motor domain. G461 to T468 contacts ATP. Residues A710 to R749 adopt a coiled-coil conformation. 3 disordered regions span residues L740 to R858, Q923 to L949, and D1004 to P1087. Composition is skewed to polar residues over residues R744–C754, P780–G797, and T836–V856. Positions E1017–S1033 are enriched in polar residues. The span at Y1042–P1054 shows a compositional bias: basic and acidic residues. Residues S1076–P1087 are compositionally biased toward basic residues.

The protein belongs to the TRAFAC class myosin-kinesin ATPase superfamily. Kinesin family. KIN-14 subfamily. In terms of assembly, interacts (via C-terminus) with VDAC3. In terms of tissue distribution, expressed in roots, leaves, stems and flowers (at protein level).

The protein resides in the cytoplasm. The protein localises to the cytoskeleton. It localises to the mitochondrion. Functionally, required for keeping the ATP levels stable and balancing the aerobic respiration pathways during seed germination at low temperature. This Arabidopsis thaliana (Mouse-ear cress) protein is Kinesin-like protein KIN-14F.